We begin with the raw amino-acid sequence, 3999 residues long: Hybrid PKS-NRPS synthetase xenE (3999 aa).

The Ketosynthase family 3 (KS3) domain maps to R13–N449. Catalysis depends on for beta-ketoacyl synthase activity residues C186, H325, and H369. Residues V562 to D879 form the Malonyl-CoA:ACP transacylase (MAT) domain. An N-terminal hotdog fold region spans residues N949–T1084. The PKS/mFAS DH domain maps to N949 to D1253. The dehydratase (DH) domain stretch occupies residues P950–E1252. The active-site Proton acceptor; for dehydratase activity is the H981. Residues L1099 to D1253 form a C-terminal hotdog fold region. Residue D1159 is the Proton donor; for dehydratase activity of the active site. Residues Y1298–E1593 are methyltransferase (cMeT) domain. Residues T2133–V2306 form the Ketoreductase (KR) domain. In terms of domain architecture, Carrier 1 spans E2414–M2495. At S2455 the chain carries O-(pantetheine 4'-phosphoryl)serine. A disordered region spans residues P2501–D2573. The span at S2526–S2554 shows a compositional bias: low complexity. Positions E2580 to E3015 are condensation. The segment at A3045–L3453 is adenylation. Residues R3562–S3642 enclose the Carrier 2 domain. The residue at position 3602 (S3602) is an O-(pantetheine 4'-phosphoryl)serine. The interval L3681–A3900 is reductase-like (R) domain (R).

It in the C-terminal section; belongs to the NRP synthetase family.

It functions in the pathway mycotoxin biosynthesis. Its function is as follows. Hybrid PKS-NRPS synthetase; part of the gene cluster that mediates the biosynthesis of xenoacremones such as xenoacremone A, a compound that shows inhibitory activity toward the PI3K/AKT signaling pathway and which has the ability to induce apoptosis of A549 lung cancer cells. Within the pathway, cooperation of the hybrid PKS-NRPS xenE and the trans-acting enoyl reductase xenG is responsible for the formation of the reduced tyrosine-nonaketide derivative. The PKS module of xenE acted in combination with the trans-acting enoyl reductase xenG to produce a double-methylated nonaketide attached to the ACP domain. In parallel, the adenylation (A) domain of the NRPS module activated L-tyrosine, which was then transferred to the ACP domain. The condensation (C) domain subsequently linked this group to the polyketide chain, forming an enzyme-bound amide. Reductive release by the C-terminal R domain afforded the aldehyde derivative. The alpha/beta hydrolase xenA then accelerates intramolecular nucleophilic attack to give a pyrrolidone derivative. Subsequently, three enzymes, xenF, xenD, and xenC, coordinately participate in the conversion to xenoacremone B. XenF catalyzes sigmatropic rearrangement to form an A-ring, which leads to an unusual intermediate with a hexane ring, which is required for the formation of the tricarbocyclic product. Epoxidation catalyzed by xenD and the formation of the paracyclophane ether catalyzed by xenC initiate a spontaneous intramolecular Diels-Alder (IMDA) reaction to yield xenoacremone B. Spontaneous hydration of xenoacremone B leads to the formation of xenoacremone A, which undergoes subsequent methylation to afford xenoacremone C. The sequence is that of Hybrid PKS-NRPS synthetase xenE from Xenoacremonium sinensis (Endophyte fungus).